Consider the following 255-residue polypeptide: tRNA pseudouridine synthase B (255 aa).

The active-site Nucleophile is the Asp-52. Substrate is bound by residues Tyr-80, Tyr-183, and Leu-204.

It belongs to the pseudouridine synthase TruB family. Type 1 subfamily.

It carries out the reaction uridine(55) in tRNA = pseudouridine(55) in tRNA. Responsible for synthesis of pseudouridine from uracil-55 in the psi GC loop of transfer RNAs. The sequence is that of tRNA pseudouridine synthase B from Blochmanniella floridana.